A 227-amino-acid chain; its full sequence is MASPNAMAAAVDPIWEDLEEEEEELEEEQFVLVELSGIIDSDFLSKCENKCKILGIDTERPIMQVDSYVFAGEYEDTLGTCVIFEEGVERVDPEGTDKTVLKYKCHTMKKLSMTRTLLTEKKEGEENIDGVEWLQMKDNDFSYRPNMICSFLHEHEDEAAGPASDKPVELEDQESQMKGSAEQTQEQEKVEHSEVEDPAPSGETPSEMESSVFMGTQDGNVSQNNQS.

A disordered region spans residues 157-227; that stretch reads DEAAGPASDK…DGNVSQNNQS (71 aa). Over residues 186 to 195 the composition is skewed to basic and acidic residues; the sequence is EQEKVEHSEV. Residues 203–227 are compositionally biased toward polar residues; it reads ETPSEMESSVFMGTQDGNVSQNNQS.

It belongs to the TFIIIC subunit 6 family. As to quaternary structure, part of the TFIIIC subcomplex TFIIIC2, consisting of six subunits, GTF3C1, GTF3C2, GTF3C3, GTF3C4, GTF3C5 and GTF3C6. Interacts with GTF3C4 and GTF3C5.

It localises to the nucleus. Involved in RNA polymerase III-mediated transcription. Integral, tightly associated component of the DNA-binding TFIIIC2 subcomplex that directly binds tRNA and virus-associated RNA promoters. This Mus musculus (Mouse) protein is General transcription factor 3C polypeptide 6.